The primary structure comprises 285 residues: Golgi phosphoprotein 3-like (285 aa).

The interval 1 to 43 is disordered; sequence MTTLTHRTRRTEVSKSCEKKIESEEDTNQERSPDNEDPGDSKD. Positions 10–43 are enriched in basic and acidic residues; it reads RTEVSKSCEKKIESEEDTNQERSPDNEDPGDSKD. 2 residues coordinate a 1,2-diacyl-sn-glycero-3-phospho-(1D-myo-inositol 4-phosphate): tryptophan 67 and arginine 76. Serine 112 carries the phosphoserine modification. A 1,2-diacyl-sn-glycero-3-phospho-(1D-myo-inositol 4-phosphate) contacts are provided by arginine 157 and arginine 160. The tract at residues 176–187 is beta-hairpin required for oligomerization; the sequence is EKQNFLLFDMTT.

Belongs to the GOLPH3/VPS74 family. Homooligomer. Does not interact MYO18; differs from GOLPH3 by its inability to interact with MYO18. May interact with ARF1.

Its subcellular location is the golgi apparatus. The protein localises to the golgi stack membrane. The protein resides in the trans-Golgi network membrane. Its function is as follows. Phosphatidylinositol-4-phosphate-binding protein that may antagonize the action of GOLPH3 which is required for the process of vesicle budding at the Golgi and anterograde transport to the plasma membrane. The chain is Golgi phosphoprotein 3-like (Golph3l) from Rattus norvegicus (Rat).